A 493-amino-acid polypeptide reads, in one-letter code: Cytoplasmic tRNA 2-thiolation protein 2 (493 aa).

Phosphoserine is present on serine 489.

Belongs to the CTU2/NCS2 family. As to quaternary structure, interacts with NCS6 and URM1. May act by forming a heterodimer with NCS6.

Its subcellular location is the cytoplasm. It participates in tRNA modification; 5-methoxycarbonylmethyl-2-thiouridine-tRNA biosynthesis. Functionally, plays a central role in 2-thiolation of mcm(5)S(2)U at tRNA wobble positions of tRNA(Lys), tRNA(Glu) and tRNA(Gln). May act by forming a heterodimer with NCS6 that ligates sulfur from thiocarboxylated URM1 onto the uridine of tRNAs at wobble position. Prior mcm(5) tRNA modification by the elongator complex is required for 2-thiolation. May also be involved in protein urmylation and in invasive and pseudohyphal growth. Inhibits replication of Brome mosaic virus. This Saccharomyces cerevisiae (strain ATCC 204508 / S288c) (Baker's yeast) protein is Cytoplasmic tRNA 2-thiolation protein 2.